Consider the following 149-residue polypeptide: 5-hydroxytryptamine receptor 1E (149 aa).

Topologically, residues 1-6 (HQPANY) are extracellular. Residues 7–31 (LICSLAVTDLLVAVLVMPLSIMYIV) form a helical membrane-spanning segment. At 32–39 (MDSWRLGY) the chain is on the cytoplasmic side. The helical transmembrane segment at 40 to 65 (FICEVWLSVDMTCCTCSILHLCVIAL) threads the bilayer. C42 and C120 are oxidised to a cystine. 2 residues coordinate serotonin: D49 and C53. The DRY motif; important for ligand-induced conformation changes motif lies at 66–68 (DRY). The Extracellular segment spans residues 66-85 (DRYWAITNAIEYARKRTAKR). The helical transmembrane segment at 86–104 (AGLMILTVWTISIFISMPP) threads the bilayer. Over 105–149 (LFWRSHRQLSPPPSQCAIQHDHVIYTIYSTLGAFYIPLTLILILY) the chain is Cytoplasmic.

This sequence belongs to the G-protein coupled receptor 1 family.

The protein resides in the cell membrane. G-protein coupled receptor for 5-hydroxytryptamine (serotonin). Also functions as a receptor for various alkaloids and psychoactive substances. Ligand binding causes a conformation change that triggers signaling via guanine nucleotide-binding proteins (G proteins) and modulates the activity of downstream effectors, such as adenylate cyclase. HTR1E is coupled to G(i)/G(o) G alpha proteins and mediates inhibitory neurotransmission by inhibiting adenylate cyclase activity. The sequence is that of 5-hydroxytryptamine receptor 1E (HTR1E) from Sus scrofa (Pig).